The chain runs to 385 residues: Actin-2 (385 aa).

The protein belongs to the actin family. ARP1 subfamily.

It is found in the cytoplasm. It localises to the cytoskeleton. The protein is Actin-2 of Pneumocystis carinii.